The following is a 323-amino-acid chain: L-lactate dehydrogenase (323 aa).

Residues V18, D39, R44, Y69, and 83-84 (GA) each bind NAD(+). Positions 86 and 92 each coordinate substrate. NAD(+) contacts are provided by residues T105, 122–124 (AAN), and S147. 124–127 (NPVD) lines the substrate pocket. A substrate-binding site is contributed by 152–155 (DTAR). Residue H179 is the Proton acceptor of the active site. Y223 is subject to Phosphotyrosine. Residue T232 coordinates substrate.

This sequence belongs to the LDH/MDH superfamily. LDH family. As to quaternary structure, homotetramer.

Its subcellular location is the cytoplasm. It catalyses the reaction (S)-lactate + NAD(+) = pyruvate + NADH + H(+). It functions in the pathway fermentation; pyruvate fermentation to lactate; (S)-lactate from pyruvate: step 1/1. Functionally, catalyzes the conversion of lactate to pyruvate. This Pediococcus acidilactici protein is L-lactate dehydrogenase.